Here is a 109-residue protein sequence, read N- to C-terminus: Tetracenomycin F2 cyclase (109 aa).

Homodimer.

It catalyses the reaction tetracenomycin F2 + H(+) = tetracenomycin F1 + H2O. It participates in antibiotic biosynthesis; tetracenomycin C biosynthesis. Its function is as follows. Catalyzing the conversion of tetracenomycin F2 to tetracenomycin F1. This chain is Tetracenomycin F2 cyclase (tcmI), found in Streptomyces glaucescens.